Here is a 358-residue protein sequence, read N- to C-terminus: Thiol protease aleurain (358 aa).

The signal sequence occupies residues 1–21; the sequence is MSAKTILSSVVLVVLVAASAA. The interval 22-42 is interaction with VSR1; that stretch reads ANIGFDESNPIRMVSDGLREV. A propeptide spans 22 to 140 (activation peptide); sequence ANIGFDESNP…KGSHKVTEAA (119 aa). Residue N125 is glycosylated (N-linked (GlcNAc...) asparagine). Intrachain disulfides connect C162-C205 and C196-C238. C165 is an active-site residue. N-linked (GlcNAc...) asparagine glycosylation occurs at N254. C296 and C346 form a disulfide bridge. Active-site residues include H305 and N325.

It belongs to the peptidase C1 family. As to quaternary structure, interacts with VSR1/BP80B. As to expression, expressed in leaves (at protein level).

It localises to the vacuole. The catalysed reaction is Hydrolysis of proteins, acting as an aminopeptidase (notably, cleaving Arg-|-Xaa bonds) as well as an endopeptidase.. Its function is as follows. May play a role in proteolysis leading to mobilization of nitrogen during senescence and starvation. The protein is Thiol protease aleurain of Arabidopsis thaliana (Mouse-ear cress).